The chain runs to 255 residues: MTKEFLPTILKQKQEELASLIMEEVKPLRLTYRLFDFLKEHHDQLQIVAEVKKASPSMGDINLDVDIVKQAQMYEAAGAAMISVLTDQVFFKGNIDFLAEISGSVSIPTLAKDFIIDEKQIVRSRNAGATVILLIVAALPEKRLKELYDFAAGLGLEVLVETHNLSELEIAHRIGAQIIGVNNRNLVTFEVDINTSLELSTHFRDDKVYISESGIFTGQDSKLVAPYFNAILVGTALMQADNVADKVKELAIDKG.

This sequence belongs to the TrpC family.

It carries out the reaction 1-(2-carboxyphenylamino)-1-deoxy-D-ribulose 5-phosphate + H(+) = (1S,2R)-1-C-(indol-3-yl)glycerol 3-phosphate + CO2 + H2O. The protein operates within amino-acid biosynthesis; L-tryptophan biosynthesis; L-tryptophan from chorismate: step 4/5. The chain is Indole-3-glycerol phosphate synthase from Streptococcus mutans serotype c (strain ATCC 700610 / UA159).